A 95-amino-acid chain; its full sequence is Large ribosomal subunit protein uL23 (95 aa).

The protein belongs to the universal ribosomal protein uL23 family. In terms of assembly, part of the 50S ribosomal subunit. Contacts protein L29, and trigger factor when it is bound to the ribosome.

Its function is as follows. One of the early assembly proteins it binds 23S rRNA. One of the proteins that surrounds the polypeptide exit tunnel on the outside of the ribosome. Forms the main docking site for trigger factor binding to the ribosome. This chain is Large ribosomal subunit protein uL23, found in Lawsonia intracellularis (strain PHE/MN1-00).